Reading from the N-terminus, the 198-residue chain is Phosphoheptose isomerase (198 aa).

The region spanning 40–198 (IIGALRGGHK…IEAALMQDAR (159 aa)) is the SIS domain. 55 to 57 (NGG) contacts substrate. Residues His-64 and Glu-68 each coordinate Zn(2+). Residues Glu-68, 97–98 (ND), 123–125 (STS), Ser-128, and Gln-175 each bind substrate. Zn(2+) is bound by residues Gln-175 and His-183.

It belongs to the SIS family. GmhA subfamily. In terms of assembly, homotetramer. It depends on Zn(2+) as a cofactor.

Its subcellular location is the cytoplasm. It catalyses the reaction 2 D-sedoheptulose 7-phosphate = D-glycero-alpha-D-manno-heptose 7-phosphate + D-glycero-beta-D-manno-heptose 7-phosphate. The protein operates within carbohydrate biosynthesis; D-glycero-D-manno-heptose 7-phosphate biosynthesis; D-glycero-alpha-D-manno-heptose 7-phosphate and D-glycero-beta-D-manno-heptose 7-phosphate from sedoheptulose 7-phosphate: step 1/1. In terms of biological role, catalyzes the isomerization of sedoheptulose 7-phosphate in D-glycero-D-manno-heptose 7-phosphate. The sequence is that of Phosphoheptose isomerase from Bradyrhizobium sp. (strain ORS 278).